The primary structure comprises 96 residues: Co-chaperonin GroES (96 aa).

Belongs to the GroES chaperonin family. Heptamer of 7 subunits arranged in a ring. Interacts with the chaperonin GroEL.

The protein localises to the cytoplasm. Together with the chaperonin GroEL, plays an essential role in assisting protein folding. The GroEL-GroES system forms a nano-cage that allows encapsulation of the non-native substrate proteins and provides a physical environment optimized to promote and accelerate protein folding. GroES binds to the apical surface of the GroEL ring, thereby capping the opening of the GroEL channel. The sequence is that of Co-chaperonin GroES from Polynucleobacter necessarius subsp. necessarius (strain STIR1).